The sequence spans 342 residues: Prostasin (342 aa).

An N-terminal signal peptide occupies residues 1 to 29 (MAPRVGLGLGQLEAVTILLLLGLLQSGIR). A propeptide spans 30–32 (ADG) (activation peptide). 2 cysteine pairs are disulfide-bonded: Cys-37-Cys-154 and Cys-70-Cys-86. One can recognise a Peptidase S1 domain in the interval 45–286 (ITGGGSAKPG…YASWIHHHVA (242 aa)). Catalysis depends on His-85, which acts as the Charge relay system. A glycan (N-linked (GlcNAc...) asparagine) is linked at Asn-110. Asp-134 functions as the Charge relay system in the catalytic mechanism. Residue Asn-159 is glycosylated (N-linked (GlcNAc...) asparagine). 3 disulfides stabilise this stretch: Cys-168–Cys-244, Cys-201–Cys-223, and Cys-234–Cys-262. Ser-238 serves as the catalytic Charge relay system. A helical membrane pass occupies residues 320–340 (LLRPVLFLPLGLTLGLLSLWL). The propeptide occupies 323–342 (PVLFLPLGLTLGLLSLWLEH).

The protein belongs to the peptidase S1 family. As to quaternary structure, heterodimer of two chains, light and heavy, held by a disulfide bond.

The protein resides in the cell membrane. It localises to the secreted. It is found in the extracellular space. Possesses a trypsin-like cleavage specificity with a preference for poly-basic substrates. Stimulates epithelial sodium channel (ENaC) activity through activating cleavage of the gamma subunits (SCNN1G). The polypeptide is Prostasin (Prss8) (Mus musculus (Mouse)).